Reading from the N-terminus, the 96-residue chain is Co-chaperonin GroES 2 (96 aa).

It belongs to the GroES chaperonin family. In terms of assembly, heptamer of 7 subunits arranged in a ring. Interacts with the chaperonin GroEL.

It localises to the cytoplasm. Together with the chaperonin GroEL, plays an essential role in assisting protein folding. The GroEL-GroES system forms a nano-cage that allows encapsulation of the non-native substrate proteins and provides a physical environment optimized to promote and accelerate protein folding. GroES binds to the apical surface of the GroEL ring, thereby capping the opening of the GroEL channel. This chain is Co-chaperonin GroES 2, found in Vibrio parahaemolyticus serotype O3:K6 (strain RIMD 2210633).